Consider the following 435-residue polypeptide: Zinc finger and BTB domain-containing protein 25 (435 aa).

The BTB domain maps to 1–107 (MDTASHSLVL…GIRFLHADYL (107 aa)). Residues Lys-142, Lys-148, Lys-198, and Lys-204 each participate in a glycyl lysine isopeptide (Lys-Gly) (interchain with G-Cter in SUMO2) cross-link. The C2H2-type 1 zinc-finger motif lies at 238–260 (HLCHYCGERFDSRSNLRQHLHTH). Residues Lys-303 and Lys-330 each participate in a glycyl lysine isopeptide (Lys-Gly) (interchain with G-Cter in SUMO2) cross-link. A C2H2-type 2 zinc finger spans residues 349–371 (MSCTICGHKFPRKSQLLEHMYTH). Residue Lys-405 forms a Glycyl lysine isopeptide (Lys-Gly) (interchain with G-Cter in SUMO2) linkage.

Expressed mainly in hematopoietic cells and testis.

The protein resides in the nucleus. Functionally, may be involved in transcriptional regulation. This is Zinc finger and BTB domain-containing protein 25 (ZBTB25) from Homo sapiens (Human).